The chain runs to 161 residues: Endoribonuclease YbeY (161 aa).

Positions 127, 131, and 137 each coordinate Zn(2+).

The protein belongs to the endoribonuclease YbeY family. The cofactor is Zn(2+).

It localises to the cytoplasm. Single strand-specific metallo-endoribonuclease involved in late-stage 70S ribosome quality control and in maturation of the 3' terminus of the 16S rRNA. The sequence is that of Endoribonuclease YbeY from Listeria innocua serovar 6a (strain ATCC BAA-680 / CLIP 11262).